The primary structure comprises 549 residues: Phosphoenolpyruvate carboxykinase (ATP) (549 aa).

250–257 (GLSGTGKT) provides a ligand contact to ATP.

Belongs to the phosphoenolpyruvate carboxykinase (ATP) family. Homotetramer.

The catalysed reaction is oxaloacetate + ATP = phosphoenolpyruvate + ADP + CO2. Its pathway is carbohydrate biosynthesis; gluconeogenesis. The protein is Phosphoenolpyruvate carboxykinase (ATP) (PCK1) of Saccharomyces cerevisiae (strain ATCC 204508 / S288c) (Baker's yeast).